Reading from the N-terminus, the 691-residue chain is Probable serine/threonine-protein kinase pXi (691 aa).

A Protein kinase domain is found at Tyr-18–Ile-263. ATP is bound by residues Ile-24–Val-32 and Lys-47. The active-site Proton acceptor is Asp-137. 4 disordered regions span residues Thr-314–Asn-350, Glu-420–Ser-447, Gln-510–Thr-536, and Gly-600–Lys-620. The span at Asn-322–Asn-336 shows a compositional bias: low complexity. Residues Ile-338–Asn-350 show a composition bias toward basic and acidic residues. 3 stretches are compositionally biased toward low complexity: residues Ser-423–Ser-433, Asn-512–Thr-536, and Gly-600–Ser-615. The stretch at Pro-642–Lys-691 forms a coiled coil.

This sequence belongs to the protein kinase superfamily. CAMK Ser/Thr protein kinase family.

It catalyses the reaction L-seryl-[protein] + ATP = O-phospho-L-seryl-[protein] + ADP + H(+). The catalysed reaction is L-threonyl-[protein] + ATP = O-phospho-L-threonyl-[protein] + ADP + H(+). The polypeptide is Probable serine/threonine-protein kinase pXi (pXi) (Dictyostelium discoideum (Social amoeba)).